A 241-amino-acid chain; its full sequence is 1-(5-phosphoribosyl)-5-[(5-phosphoribosylamino)methylideneamino] imidazole-4-carboxamide isomerase (241 aa).

D8 serves as the catalytic Proton acceptor. Residue D130 is the Proton donor of the active site.

It belongs to the HisA/HisF family.

The protein localises to the cytoplasm. It carries out the reaction 1-(5-phospho-beta-D-ribosyl)-5-[(5-phospho-beta-D-ribosylamino)methylideneamino]imidazole-4-carboxamide = 5-[(5-phospho-1-deoxy-D-ribulos-1-ylimino)methylamino]-1-(5-phospho-beta-D-ribosyl)imidazole-4-carboxamide. Its pathway is amino-acid biosynthesis; L-histidine biosynthesis; L-histidine from 5-phospho-alpha-D-ribose 1-diphosphate: step 4/9. The sequence is that of 1-(5-phosphoribosyl)-5-[(5-phosphoribosylamino)methylideneamino] imidazole-4-carboxamide isomerase from Leptospira borgpetersenii serovar Hardjo-bovis (strain JB197).